Reading from the N-terminus, the 671-residue chain is Protein KHNYN (671 aa).

Disordered stretches follow at residues R234–E274, E294–P327, H344–L402, and G577–R626. The segment covering T250–S272 has biased composition (basic and acidic residues). Residues P351–P365 are compositionally biased toward pro residues. Phosphoserine is present on S355. Over residues G367–K381 the composition is skewed to basic and acidic residues. The region spanning L430–E582 is the RNase NYN domain. Residues Q591–G612 show a composition bias toward polar residues.

Belongs to the N4BP1 family.

In Mus musculus (Mouse), this protein is Protein KHNYN (Khnyn).